The sequence spans 478 residues: MSTFYTVLPILFLAIAGMIMLMSGVFTDRDHSFAITAASIVVLAIAARLLVAAPGGTIFHGLYQTNDFTRFADVLVALGAIGALALSVTFNRNIGITRFEFPVLVLFAVTGMVVLVSASDLITLYIGFEIQSLALYVLAAFARHNLRSSEAGLKYFVLGALSSGLLLYGISLVYGFAGTTNFAGIAHALAGHPTAAVGSTIGLVFVLVGLAFKISAAPFHMWTPDVYEGAPTSVTAFFATAPKIAVFALLLRVMLGPFGPVLGQWRDLVQIIAAASMVIGAIGAIRQTSIKRLMGYSSIGHMGYALMGLAAGTAAGVSGALIYLAIYLVMSLGTFGCIIAMSRGRQPVERIADLAGMASDDPRFAFVLAVMMWSMAGIPPLAGFFGKFYVFAAAINAGLGPLAVLGIITSVIAAFYYLRVIKVMYFDAGEPGLDRRSAGVSLVMGAAAAFTVLFVFHPSTLTTLSTMAAHALMTSQGF.

14 consecutive transmembrane segments (helical) span residues 6–26 (TVLP…SGVF), 33–53 (FAIT…LVAA), 71–91 (FADV…VTFN), 99–119 (FEFP…VSAS), 121–141 (LITL…LAAF), 156–176 (FVLG…VYGF), 193–212 (PTAA…GLAF), 244–264 (IAVF…VLGQ), 265–285 (WRDL…IGAI), 299–319 (IGHM…GVSG), 321–341 (LIYL…IIAM), 364–384 (FAFV…LAGF), 388–408 (FYVF…LGII), and 438–458 (AGVS…VFHP).

It belongs to the complex I subunit 2 family. NDH-1 is composed of 14 different subunits. Subunits NuoA, H, J, K, L, M, N constitute the membrane sector of the complex.

It is found in the cell inner membrane. It carries out the reaction a quinone + NADH + 5 H(+)(in) = a quinol + NAD(+) + 4 H(+)(out). Functionally, NDH-1 shuttles electrons from NADH, via FMN and iron-sulfur (Fe-S) centers, to quinones in the respiratory chain. The immediate electron acceptor for the enzyme in this species is believed to be ubiquinone. Couples the redox reaction to proton translocation (for every two electrons transferred, four hydrogen ions are translocated across the cytoplasmic membrane), and thus conserves the redox energy in a proton gradient. The chain is NADH-quinone oxidoreductase subunit N 1 from Acidiphilium cryptum (strain JF-5).